The sequence spans 185 residues: Ribosome-recycling factor (185 aa).

This sequence belongs to the RRF family.

It localises to the cytoplasm. In terms of biological role, responsible for the release of ribosomes from messenger RNA at the termination of protein biosynthesis. May increase the efficiency of translation by recycling ribosomes from one round of translation to another. This is Ribosome-recycling factor from Listeria monocytogenes serovar 1/2a (strain ATCC BAA-679 / EGD-e).